Consider the following 182-residue polypeptide: Ribulose bisphosphate carboxylase small subunit, chloroplastic 4 (182 aa).

A chloroplast-targeting transit peptide spans 1–41; sequence MAATMMNKTVVLSKGCTKPSAVPKVSINRKGFLNTAMNKKR.

It belongs to the RuBisCO small chain family. Heterohexadecamer of 8 large and 8 small subunits.

It is found in the plastid. Its subcellular location is the chloroplast. RuBisCO catalyzes two reactions: the carboxylation of D-ribulose 1,5-bisphosphate, the primary event in carbon dioxide fixation, as well as the oxidative fragmentation of the pentose substrate. Both reactions occur simultaneously and in competition at the same active site. Although the small subunit is not catalytic it is essential for maximal activity. The polypeptide is Ribulose bisphosphate carboxylase small subunit, chloroplastic 4 (Acetabularia peniculus (Green alga)).